A 365-amino-acid polypeptide reads, in one-letter code: Pre-mRNA-splicing factor srp2 (365 aa).

RRM domains are found at residues 6–69 (LFVG…RIVV) and 100–166 (LIVE…AVTL). The disordered stretch occupies residues 166 to 365 (LREDPDAANE…SAEGQVAAEW (200 aa)). A compositionally biased stretch (basic residues) spans 184 to 194 (FRSRSPPARRR). Phosphoserine occurs at positions 186, 188, 276, 294, 296, 298, and 308. Positions 195 to 307 (YRDDYRRGGD…SPRRDREENR (113 aa)) are enriched in basic and acidic residues. Positions 316 to 332 (SYSAAPEASMESSAPTE) are enriched in low complexity. The segment covering 341–353 (EEQQPLQNHSDVG) has biased composition (polar residues).

The protein belongs to the splicing factor SR family. In terms of processing, extensively phosphorylated on serine residues in the RS domain.

Its subcellular location is the nucleus. Its function is as follows. Has a role in pre-mRNA splicing where it is involved in spliceosome assembly. The protein is Pre-mRNA-splicing factor srp2 (srp2) of Schizosaccharomyces pombe (strain 972 / ATCC 24843) (Fission yeast).